The sequence spans 626 residues: MSTNQETRGFQSEVKQLLQLMIHSLYSNKEIFLRELISNASDAADKLRFKALSNPDLYAGDGELRVCISFDSEKGTLTVSDNGIGMTREQVIDHLGTIAKSGTKEFLAALGSDQAKDSQLIGQFGVGFYSAFIVADKVTVKTRAAGEPADKGVLWESAGEGDYTVADIEKKSRGTDVILHLRDDEKEFLNEWRLRGIIGKYSDHIGLPVEMLTKEYEDEGKEIGEKWEKINKSDALWTRSKNEISDEEYKEFYKHLSHDFADPLLWAHNKVEGNQEYTSLLYVPSKAPWDLFNREHKHGLKLYVQRVFIMDDAEQFMPNYLRFMRGLIDSNDLPLNVSREILQDNKVTAALRKALTKRSLQMLEKLAKDDAEKYQQFWKEFGLVLKEGPAEDFANKEAIAKLLRFASTHNDSSEQNVSLEDYVSRMKEGQKAIYYITADSYVAARNSPHLELFNKKGIEVLLLSDRIDEWMLSYLTEFDGKPLQSITKADLDLGDLADKEAEEQKAQDESFGSFVERVKTLLGGRVKEVRLTHRLTDTPAVVSTDNDQMTTQMAKLFAAAGQPVPEVKYTFELNPEHHLVKKVAEIADEAQFADWVELLLEQAMLAERGSLENPAAFIKRINKLLG.

The a; substrate-binding stretch occupies residues 1–339 (MSTNQETRGF…SNDLPLNVSR (339 aa)). Residues 340–555 (EILQDNKVTA…NDQMTTQMAK (216 aa)) are b. The c stretch occupies residues 556-626 (LFAAAGQPVP…FIKRINKLLG (71 aa)).

The protein belongs to the heat shock protein 90 family. As to quaternary structure, homodimer.

The protein resides in the cytoplasm. Molecular chaperone. Has ATPase activity. The protein is Chaperone protein HtpG of Aggregatibacter actinomycetemcomitans (Actinobacillus actinomycetemcomitans).